The sequence spans 401 residues: uncharacterized protein (401 aa).

Residues cysteine 7, cysteine 13, cysteine 16, and cysteine 94 each contribute to the [4Fe-4S] cluster site. Residues glutamine 230, tyrosine 259, glutamate 280, and aspartate 328 each contribute to the S-adenosyl-L-methionine site. The Nucleophile role is filled by cysteine 355.

This sequence belongs to the class I-like SAM-binding methyltransferase superfamily. RNA M5U methyltransferase family.

This is an uncharacterized protein from Chlamydia caviae (strain ATCC VR-813 / DSM 19441 / 03DC25 / GPIC) (Chlamydophila caviae).